The sequence spans 404 residues: Cysteine desulfurase IscS (404 aa).

Residues 73–74 (AT), asparagine 153, glutamine 181, and 201–203 (SAH) each bind pyridoxal 5'-phosphate. The residue at position 204 (lysine 204) is an N6-(pyridoxal phosphate)lysine. Pyridoxal 5'-phosphate is bound at residue threonine 241. The active-site Cysteine persulfide intermediate is the cysteine 327. Residue cysteine 327 participates in [2Fe-2S] cluster binding.

Belongs to the class-V pyridoxal-phosphate-dependent aminotransferase family. NifS/IscS subfamily. Homodimer. Forms a heterotetramer with IscU, interacts with other sulfur acceptors. Pyridoxal 5'-phosphate serves as cofactor.

The protein resides in the cytoplasm. The enzyme catalyses (sulfur carrier)-H + L-cysteine = (sulfur carrier)-SH + L-alanine. The protein operates within cofactor biosynthesis; iron-sulfur cluster biosynthesis. In terms of biological role, master enzyme that delivers sulfur to a number of partners involved in Fe-S cluster assembly, tRNA modification or cofactor biosynthesis. Catalyzes the removal of elemental sulfur atoms from cysteine to produce alanine. Functions as a sulfur delivery protein for Fe-S cluster synthesis onto IscU, an Fe-S scaffold assembly protein, as well as other S acceptor proteins. In Anaeromyxobacter sp. (strain K), this protein is Cysteine desulfurase IscS.